The following is a 115-amino-acid chain: Large ribosomal subunit protein bL19 (115 aa).

It belongs to the bacterial ribosomal protein bL19 family.

Functionally, this protein is located at the 30S-50S ribosomal subunit interface and may play a role in the structure and function of the aminoacyl-tRNA binding site. This chain is Large ribosomal subunit protein bL19, found in Enterobacter sp. (strain 638).